The sequence spans 302 residues: 4-hydroxy-tetrahydrodipicolinate synthase (302 aa).

T50 contacts pyruvate. The Proton donor/acceptor role is filled by Y138. Catalysis depends on K167, which acts as the Schiff-base intermediate with substrate. V209 is a binding site for pyruvate.

It belongs to the DapA family. As to quaternary structure, homotetramer; dimer of dimers.

The protein resides in the cytoplasm. It carries out the reaction L-aspartate 4-semialdehyde + pyruvate = (2S,4S)-4-hydroxy-2,3,4,5-tetrahydrodipicolinate + H2O + H(+). Its pathway is amino-acid biosynthesis; L-lysine biosynthesis via DAP pathway; (S)-tetrahydrodipicolinate from L-aspartate: step 3/4. Functionally, catalyzes the condensation of (S)-aspartate-beta-semialdehyde [(S)-ASA] and pyruvate to 4-hydroxy-tetrahydrodipicolinate (HTPA). This chain is 4-hydroxy-tetrahydrodipicolinate synthase, found in Salinibacter ruber (strain DSM 13855 / M31).